Reading from the N-terminus, the 159-residue chain is 2-amino-4-hydroxy-6-hydroxymethyldihydropteridine pyrophosphokinase (159 aa).

It belongs to the HPPK family. As to quaternary structure, monomer.

It catalyses the reaction 6-hydroxymethyl-7,8-dihydropterin + ATP = (7,8-dihydropterin-6-yl)methyl diphosphate + AMP + H(+). The protein operates within cofactor biosynthesis; tetrahydrofolate biosynthesis; 2-amino-4-hydroxy-6-hydroxymethyl-7,8-dihydropteridine diphosphate from 7,8-dihydroneopterin triphosphate: step 4/4. Functionally, catalyzes the transfer of pyrophosphate from adenosine triphosphate (ATP) to 6-hydroxymethyl-7,8-dihydropterin, an enzymatic step in folate biosynthesis pathway. The sequence is that of 2-amino-4-hydroxy-6-hydroxymethyldihydropteridine pyrophosphokinase (folK) from Escherichia coli (strain K12).